Consider the following 89-residue polypeptide: FMRFamide-like neuropeptides 19 (89 aa).

The first 20 residues, 1-20, serve as a signal peptide directing secretion; the sequence is MSFQLTLFSMLFLLIAVVVG. A propeptide spanning residues 21 to 67 is cleaved from the precursor; the sequence is QPIQSQNGDLKMQAVQDNSPLNMEAFNDDSALYDYLEQSDPSLKSME. F76 carries the phenylalanine amide modification. The propeptide occupies 80–89; that stretch reads ASWASSVRFG.

The protein belongs to the FARP (FMRFamide related peptide) family. In terms of tissue distribution, each flp gene is expressed in a distinct set of neurons. Flp-19 is expressed in the URX interneurons, the serotonin and acetylcholine-expressing HSN neurons, and the AIN, AWA and BAG neurons.

It localises to the secreted. Functionally, FMRFamides and FMRFamide-like peptides are neuropeptides. WANQVRF-amide inhibits the activity of dissected pharyngeal myogenic muscle system. In Caenorhabditis elegans, this protein is FMRFamide-like neuropeptides 19.